Here is a 328-residue protein sequence, read N- to C-terminus: GTPase Obg 2 (328 aa).

One can recognise an Obg domain in the interval 1–139 (MSFRREKFIE…HCVLLKLKIV (139 aa)). One can recognise an OBG-type G domain in the interval 140-309 (SDVGIIGMPN…LHAQVKKAVV (170 aa)). GTP-binding positions include 146–153 (GMPNAGKS), 171–175 (FTTLE), 192–195 (DIPG), 259–262 (NKCD), and 290–292 (GDE). Mg(2+)-binding residues include Ser-153 and Thr-173.

It belongs to the TRAFAC class OBG-HflX-like GTPase superfamily. OBG GTPase family. Monomer. Mg(2+) is required as a cofactor.

The protein resides in the cytoplasm. Its function is as follows. An essential GTPase which binds GTP, GDP and possibly (p)ppGpp with moderate affinity, with high nucleotide exchange rates and a fairly low GTP hydrolysis rate. Plays a role in control of the cell cycle, stress response, ribosome biogenesis and in those bacteria that undergo differentiation, in morphogenesis control. The sequence is that of GTPase Obg 2 from Anaplasma marginale (strain St. Maries).